We begin with the raw amino-acid sequence, 566 residues long: Folate-like transporter DDB_G0272544 (566 aa).

A coiled-coil region spans residues 24–81 (RNQDEDENENENNDNLENDNNKRNYISINNYEPYKEIDNNNNKNNNNNNIINNNNKIN). Positions 25–46 (NQDEDENENENNDNLENDNNKR) are disordered. Residues 27 to 40 (DEDENENENNDNLE) are compositionally biased toward acidic residues. The next 11 helical transmembrane spans lie at 148–168 (VFLL…IIII), 171–191 (VAKI…WMIL), 194–214 (ITEG…YFSL), 226–246 (VNAG…LLVE), 252–272 (VYLL…ALGF), 304–324 (IWSG…QNLF), 332–352 (SWNG…AIIP), 364–384 (GIIL…MGFG), 388–408 (VVSA…SPIV), 420–440 (IGVL…LVQS), and 458–478 (YGAC…FLFL). Residues 517–544 (YNANIIDFENNNNNNNNNNNNNNNNNNN) adopt a coiled-coil conformation. The segment covering 526 to 556 (NNNNNNNNNNNNNNNNNNNNNNNNNNNNNNN) has biased composition (low complexity). Positions 526–566 (NNNNNNNNNNNNNNNNNNNNNNNNNNNNNNNVGIGGNDNFK) are disordered.

Belongs to the reduced folate carrier (RFC) transporter (TC 2.A.48) family.

Its subcellular location is the membrane. Functionally, folate transporter. In Dictyostelium discoideum (Social amoeba), this protein is Folate-like transporter DDB_G0272544.